Reading from the N-terminus, the 170-residue chain is Fimbrial protein (170 aa).

A propeptide spans 1–7 (MNTLQKG) (leader sequence). An N-methylphenylalanine modification is found at phenylalanine 8. Residues 8–28 (FTLIELMIVIAIVGILAAVAL) form a helical membrane-spanning segment. Serine 70 carries an O-linked (Gal...) serine glycan. At serine 100 the chain carries O-(sn-1-glycerophosphoryl)serine. Cysteine 127 and cysteine 163 form a disulfide bridge.

It belongs to the N-Me-Phe pilin family. The pili are polar flexible filaments of about 5.4 nanometers diameter and 2.5 micrometers average length; they consist of only a single polypeptide chain arranged in a helical configuration of five subunits per turn in the assembled pilus. O-linked glycan has been reported to consist either of the Gal(alpha1-3) GlcNAc disaccharide, or the Gal(beta 1-4) Gal(alpha 1-3) 2,4-diacetamido-2,4,6-trideoxyhexose trisaccharide.

Its subcellular location is the fimbrium. It localises to the membrane. Functionally, major component of the type IV pilus (T4P) that plays a role in cellular adherence, microcolony formation as well as twitching motility. The chain is Fimbrial protein (pilE) from Neisseria meningitidis serogroup B (strain ATCC BAA-335 / MC58).